Reading from the N-terminus, the 510-residue chain is Probable inositol 3-phosphate synthase isozyme 3 (510 aa).

Belongs to the myo-inositol 1-phosphate synthase family. It depends on NAD(+) as a cofactor. As to expression, expressed in siliques, leaves, roots, seed endosperm, but not in embryos. Highest expression in roots. Confined to vascular tissue and hydathodes of leaves.

It localises to the cytoplasm. The catalysed reaction is D-glucose 6-phosphate = 1D-myo-inositol 3-phosphate. It participates in polyol metabolism; myo-inositol biosynthesis; myo-inositol from D-glucose 6-phosphate: step 1/2. In terms of biological role, key enzyme in myo-inositol biosynthesis pathway that catalyzes the conversion of glucose 6-phosphate to 1-myo-inositol 1-phosphate in a NAD-dependent manner. The polypeptide is Probable inositol 3-phosphate synthase isozyme 3 (IPS3) (Arabidopsis thaliana (Mouse-ear cress)).